A 203-amino-acid chain; its full sequence is AFG2-interacting ribosome maturation factor (203 aa).

Part of the 55LCC heterohexameric ATPase complex composed at least of AIRIM, AFG2A, AFG2B and CINP. Does not associate with pre-60S ribosomal particles. Post-translationally, phosphorylated on serines by CK2 kinase.

It is found in the nucleus. The protein resides in the cytoplasm. In terms of biological role, part of the 55LCC heterohexameric ATPase complex which is chromatin-associated and promotes replisome proteostasis to maintain replication fork progression and genome stability. Required for replication fork progression, sister chromatid cohesion, and chromosome stability. The ATPase activity is specifically enhanced by replication fork DNA and is coupled to cysteine protease-dependent cleavage of replisome substrates in response to replication fork damage. Uses ATPase activity to process replisome substrates in S-phase, facilitating their proteolytic turnover from chromatin to ensure DNA replication and mitotic fidelity. Involved in the cytoplasmic maturation steps of pre-60S ribosomal particles by promoting the release of shuttling protein RSL24D1/RLP24 from the pre-ribosomal particles. The protein is AFG2-interacting ribosome maturation factor of Homo sapiens (Human).